The sequence spans 176 residues: Probable inosine/xanthosine triphosphatase (176 aa).

Asp-36 contacts Mg(2+).

The protein belongs to the YjjX NTPase family. Homodimer. The cofactor is Mg(2+). It depends on Mn(2+) as a cofactor.

The enzyme catalyses XTP + H2O = XDP + phosphate + H(+). It catalyses the reaction ITP + H2O = IDP + phosphate + H(+). Its function is as follows. Phosphatase that hydrolyzes non-canonical purine nucleotides such as XTP and ITP to their respective diphosphate derivatives. Probably excludes non-canonical purines from DNA/RNA precursor pool, thus preventing their incorporation into DNA/RNA and avoiding chromosomal lesions. In Saccharolobus solfataricus (strain ATCC 35092 / DSM 1617 / JCM 11322 / P2) (Sulfolobus solfataricus), this protein is Probable inosine/xanthosine triphosphatase.